Reading from the N-terminus, the 495-residue chain is Amorpha-4,11-diene 12-monooxygenase (495 aa).

At 1–6 the chain is on the cytoplasmic side; sequence MKSILK. The helical; Signal-anchor for type II membrane protein transmembrane segment at 7–29 threads the bilayer; sequence AMALSLTTSIALATILLFVYKFA. Residues 30 to 495 lie on the Lumenal side of the membrane; it reads TRSKSTKKSL…KTELLLVPSF (466 aa). N-linked (GlcNAc...) asparagine glycosylation is found at Asn176, Asn261, Asn267, Asn386, and Asn417. Heme is bound at residue Cys439.

It belongs to the cytochrome P450 family. Requires heme as cofactor. In terms of tissue distribution, highly expressed both in apical and sub-apical cells of glandular secretory trichomes. Detected in flower buds, leaves and roots. Also present in non-glandular trichome cells.

It localises to the endoplasmic reticulum membrane. The catalysed reaction is (+)-amorpha-4,11-diene + 3 reduced [NADPH--hemoprotein reductase] + 3 O2 = (+)-artemisinate + 3 oxidized [NADPH--hemoprotein reductase] + 4 H2O + 4 H(+). It functions in the pathway sesquiterpene biosynthesis. Functionally, involved in the biosynthesis of the antimalarial endoperoxide artemisinin. Catalyzes three consecutive oxidations of amorpha-4,11-diene to produce artemisinic acid, with artemisinic alcohol and artemisinic aldehyde as intermediates products, but is unable to oxidize germacrene A. No activity with limonene, alpha-pinene, beta-pinene, pinocarveol, (-)-alloisolongifolene, caryophyllene, (-)-alpha-gurjunene, (+)-gamma-gurjunene, (+)-ledene, (+)-beta-selinene and (+)-valencene as substrates. The sequence is that of Amorpha-4,11-diene 12-monooxygenase from Artemisia annua (Sweet wormwood).